A 232-amino-acid chain; its full sequence is Large ribosomal subunit protein uL1 (232 aa).

The protein belongs to the universal ribosomal protein uL1 family. As to quaternary structure, part of the 50S ribosomal subunit.

Functionally, binds directly to 23S rRNA. The L1 stalk is quite mobile in the ribosome, and is involved in E site tRNA release. In terms of biological role, protein L1 is also a translational repressor protein, it controls the translation of the L11 operon by binding to its mRNA. The polypeptide is Large ribosomal subunit protein uL1 (Burkholderia multivorans (strain ATCC 17616 / 249)).